Consider the following 383-residue polypeptide: Cell division protein FtsZ (383 aa).

GTP-binding positions include 20-24, 107-109, E138, R142, and N186; these read GGGGN and GTG.

The protein belongs to the FtsZ family. Homodimer. Polymerizes to form a dynamic ring structure in a strictly GTP-dependent manner. Interacts directly with several other division proteins.

It is found in the cytoplasm. Its function is as follows. Essential cell division protein that forms a contractile ring structure (Z ring) at the future cell division site. The regulation of the ring assembly controls the timing and the location of cell division. One of the functions of the FtsZ ring is to recruit other cell division proteins to the septum to produce a new cell wall between the dividing cells. Binds GTP and shows GTPase activity. The sequence is that of Cell division protein FtsZ from Escherichia coli O157:H7.